A 312-amino-acid polypeptide reads, in one-letter code: Taste receptor type 2 member 103 (312 aa).

The Extracellular segment spans residues 1 to 6 (MVLTIR). Residues 7–27 (AILWVTLITIISLEFIIGILG) form a helical membrane-spanning segment. The Cytoplasmic portion of the chain corresponds to 28–61 (NVFIALVNIIDWVKRGKISAVDKTYMALAISRTA). The helical transmembrane segment at 62–82 (FLLSLITGFLVSLLDPALLGM) threads the bilayer. Topologically, residues 83–92 (RTMVRLLTIS) are extracellular. Residues 93 to 113 (WMVTNHFSVWFATCLSIFYFL) traverse the membrane as a helical segment. Topologically, residues 114-132 (KIANFSNSIFLVLKWEAKK) are cytoplasmic. A helical transmembrane segment spans residues 133-153 (VVSVTLVVSVIILIMNIIVIN). At 154–185 (KFTDRLQVNTLQNCSTSNTLKDYGLFLFISTG) the chain is on the extracellular side. An N-linked (GlcNAc...) asparagine glycan is attached at asparagine 166. A helical transmembrane segment spans residues 186 to 206 (FTLTPFAVSLTMFLLLIFSLW). Topologically, residues 207-229 (RHLKNMCHSATGSRDVSTVAHIK) are cytoplasmic. A helical transmembrane segment spans residues 230 to 250 (GLQTVVTFLLLYTAFVMSLLS). Residues 251–264 (ESLNINIQHTNLLS) lie on the Extracellular side of the membrane. The chain crosses the membrane as a helical span at residues 265 to 285 (HFLRSIGVAFPTGHSCVLILG). At 286 to 312 (NSKLRQASLSVILWLRYKYKHIENWGP) the chain is on the cytoplasmic side.

The protein belongs to the G-protein coupled receptor T2R family. Expressed in subsets of taste receptor cells of the tongue and palate epithelium and exclusively in gustducin-positive cells. Expressed in 15% taste bud cells in circumvallate and foliate papillae but only in 2% in fungiform papillae.

The protein resides in the membrane. Its function is as follows. Gustducin-coupled receptor implicated in the perception of bitter compounds in the oral cavity and the gastrointestinal tract. Signals through PLCB2 and the calcium-regulated cation channel TRPM5. This chain is Taste receptor type 2 member 103 (Tas2r103), found in Mus musculus (Mouse).